Here is a 213-residue protein sequence, read N- to C-terminus: BAG family molecular chaperone regulator 6, mitochondrial (213 aa).

The IQ domain maps to 53–82 (DDAAAARIQAAFRGHLVRRHAAAVRGADDE). The BAG domain maps to 75–152 (AVRGADDEAT…GLQEVFDAVL (78 aa)).

In terms of assembly, interacts with CAM1-1 under normal conditions. Dissociation of the interaction when calcium-CAM1-1 binding increases under saline-alkaline stress.

It is found in the mitochondrion. Functionally, co-chaperone that regulates stress responses. Acts as a negative regulator of saline-alkaline stress tolerance. May participate in stress response through regulating the homeostasis of iron, manganese and zinc ions. This is BAG family molecular chaperone regulator 6, mitochondrial from Oryza sativa subsp. japonica (Rice).